The primary structure comprises 350 residues: MFS transporter OpS2 (350 aa).

8 helical membrane-spanning segments follow: residues 3–23 (FLAG…VADL), 34–54 (GYFF…GGIL), 65–85 (WGAV…LPET), 141–161 (FMTC…NLAI), 174–194 (AIIL…ASVV), 227–247 (MCEN…VFGW), 253–273 (IFWF…SLIF), and 312–332 (PLLG…ICWA).

It belongs to the major facilitator superfamily.

It is found in the cell membrane. Its function is as follows. MFS transporter; part of the gene cluster that mediates the biosynthesis of the bibenzoquinone oosporein, a metabolite required for fungal virulence that acts by evading host immunity to facilitate fungal multiplication in insects. The function of this putative MFS transporter remains unclear since its deletion leads to increased oosporein production. The chain is MFS transporter OpS2 from Beauveria bassiana (strain ARSEF 2860) (White muscardine disease fungus).